The following is a 67-amino-acid chain: Penaeidin-4c (67 aa).

Residues 1-19 form the signal peptide; that stretch reads MRLVVCLVFLASFALVCQG. 3 disulfide bridges follow: Cys42-Cys56, Cys45-Cys63, and Cys57-Cys64. At Arg66 the chain carries Arginine amide.

The protein belongs to the penaeidin family.

The protein resides in the cytoplasmic granule. Antibacterial and antifungal activity. Presents chitin-binding activity. The sequence is that of Penaeidin-4c from Penaeus vannamei (Whiteleg shrimp).